A 508-amino-acid polypeptide reads, in one-letter code: MGLPWYRVHTVVLNDPGRLISVHIMHTALVAGWAGSMALYELAVFDPSDPVLDPMWRQGMFVIPFMTRLGITNSWGGWSITGGTITNPGIWSYEGVAGAHIVFSGLCFLAAIWHWVYWDLEIFCDERTGKPSLDLPKIFGIHLFLSGLACFGFGAFHVTGLYGPGIWVSDPYGLTGKVQSVNPAWGVEGFDPFVPGGIASHHIAAGTLGILAGLFHLSVRPPQRLYKGLRMGNIETVLSSSIAAVFFAAFVVAGTMWYGSATTPIELFGPTRYQWDQGYFQQEIYRRVGAGLAENQSLSEAWSKIPEKLAFYDYIGNNPAKGGLFRAGSMDNGDGIAVGWLGHPIFRDKEGRELFVRRMPTFFETFPVVLVDGDGIVRADVPFRRAESKYSVEQVGVTVEFYGGELNGVSYSDPATVKKYARRAQLGEIFELDRATLKSDGVFRSSPRGWFTFGHASFALLFFFGHIWHGARTLFRDVFAGIDPDLDAQVEFGTFQKLGDPTTRRQVV.

A run of 6 helical transmembrane segments spans residues 21-36 (SVHI…WAGS), 101-115 (IVFS…IWHW), 140-156 (GIHL…FGAF), 203-218 (IAAG…FHLS), 237-252 (VLSS…AFVV), and 457-472 (SFAL…HGAR).

The protein belongs to the PsbB/PsbC family. PsbB subfamily. As to quaternary structure, PSII is composed of 1 copy each of membrane proteins PsbA, PsbB, PsbC, PsbD, PsbE, PsbF, PsbH, PsbI, PsbJ, PsbK, PsbL, PsbM, PsbT, PsbX, PsbY, PsbZ, Psb30/Ycf12, at least 3 peripheral proteins of the oxygen-evolving complex and a large number of cofactors. It forms dimeric complexes. Requires Binds multiple chlorophylls. PSII binds additional chlorophylls, carotenoids and specific lipids. as cofactor.

Its subcellular location is the plastid. The protein resides in the chloroplast thylakoid membrane. Functionally, one of the components of the core complex of photosystem II (PSII). It binds chlorophyll and helps catalyze the primary light-induced photochemical processes of PSII. PSII is a light-driven water:plastoquinone oxidoreductase, using light energy to abstract electrons from H(2)O, generating O(2) and a proton gradient subsequently used for ATP formation. In Vitis vinifera (Grape), this protein is Photosystem II CP47 reaction center protein.